Reading from the N-terminus, the 345-residue chain is CCAAT/enhancer-binding protein beta (345 aa).

A required for Lys-174 sumoylation region spans residues 1-24 (MQRLVAWDPACLPLPPPPPAFKSM). Position 3 is an asymmetric dimethylarginine; by CARM1 (Arg3). The interval 24–135 (MEVANFYYEA…YGGKNCKKPA (112 aa)) is required for MYC transcriptional repression. N6-acetyllysine; alternate is present on Lys43. Lys43 is modified (N6-methylated lysine; alternate). Disordered regions lie at residues 46-67 (PAAP…GSIG) and 79-116 (LEPL…QHHD). A compositionally biased stretch (pro residues) spans 47–59 (AAPPAARPGPRPP). A compositionally biased stretch (low complexity) spans 84 to 100 (APQAPAPATATDTFEAA). The 9aaTAD signature appears at 116–124 (DFLSDLFSD). 2 positions are modified to N6-acetyllysine; by KAT2A and KAT2B: Lys129 and Lys132. N6-acetyllysine; by KAT2A and KAT2B; alternate is present on Lys133. Residue Lys133 forms a Glycyl lysine isopeptide (Lys-Gly) (interchain with G-Cter in SUMO2); alternate linkage. Residues 157 to 178 (FAPLHPPPPPPPPPAELKAEPG) are disordered. Residues 160 to 171 (LHPPPPPPPPPA) show a composition bias toward pro residues. Lys174 is covalently cross-linked (Glycyl lysine isopeptide (Lys-Gly) (interchain with G-Cter in SUMO2); alternate). A Glycyl lysine isopeptide (Lys-Gly) (interchain with G-Cter in SUMO); alternate cross-link involves residue Lys174. Glycyl lysine isopeptide (Lys-Gly) (interchain with G-Cter in SUMO2) cross-links involve residues Lys185 and Lys187. A compositionally biased stretch (low complexity) spans 218-232 (SGSSGSLSTSSSSSP). The disordered stretch occupies residues 218–271 (SGSSGSLSTSSSSSPPGTPSPADAKAPPTACYAGAAPAPSQVKSKAKKTVDKHS). Position 226 is a phosphothreonine; by GSK3-beta (Thr226). Ser227 and Ser228 each carry an O-linked (GlcNAc) serine glycan. Ser231 is subject to Phosphoserine; by GSK3-beta. A Phosphothreonine; by RPS6KA1, CDK2 and MAPK modification is found at Thr235. Residues Lys260 and Lys262 each participate in a glycyl lysine isopeptide (Lys-Gly) (interchain with G-Cter in SUMO2) cross-link. Thr266 carries the phosphothreonine; by RPS6KA1 and PKC/PRKCA modification. In terms of domain architecture, bZIP spans 271–334 (SDEYKIRRER…STLRNLFKQL (64 aa)). The basic motif stretch occupies residues 275–295 (KIRRERNNIAVRKSRDKAKMR). Ser288 bears the Phosphoserine; by PKC/PRKCA mark. Positions 297 to 304 (LETQHKVL) are leucine-zipper. Ser325 is subject to Phosphoserine; by CaMK2. Lys332 is covalently cross-linked (Glycyl lysine isopeptide (Lys-Gly) (interchain with G-Cter in SUMO2)).

This sequence belongs to the bZIP family. C/EBP subfamily. In terms of assembly, binds DNA as a homodimer and as a heterodimer. Interacts with ATF4. Binds DNA as a heterodimer with ATF4. Interacts with MYB; within the complex, MYB and CEBPB bind to different promoter regions. Can form stable heterodimers with CEBPD. Can form stable heterodimers with CEBPA and CEBPE. Interacts with SIX1. Isoform 2 and isoform 3 also form heterodimers. Interacts with TRIM28 and PTGES2. Interacts with PRDM16. Interacts with CCDC85B. Forms a complex with THOC5. Interacts with ZNF638; this interaction increases transcriptional activation. Interacts with CIDEA and CIDEC; these interactions increase transcriptional activation of a subset of CEBPB downstream target genes. Interacts with DDIT3/CHOP. Interacts with EP300; recruits EP300 to chromatin. Interacts with RORA; the interaction disrupts interaction with EP300. Interacts (not methylated) with MED23, MED26, SMARCA2, SMARCB1 and SMARCC1. Interacts with KAT2A and KAT2B. Interacts with ATF5; EP300 is required for ATF5 and CEBPB interaction and DNA binding. Interacts with NFE2L1; the heterodimer represses expression of DSPP during odontoblast differentiation. Methylated. Methylation at Arg-3 by CARM1 and at Lys-43 by EHMT2 inhibit transactivation activity. Methylation is probably inhibited by phosphorylation at Thr-235. In terms of processing, sumoylated by polymeric chains of SUMO2 or SUMO3. Sumoylation at Lys-174 is required for inhibition of T-cells proliferation. In adipocytes, sumoylation at Lys-174 by PIAS1 leads to ubiquitination and subsequent proteasomal degradation. Desumoylated by SENP2, which abolishes ubiquitination and stabilizes protein levels. Post-translationally, ubiquitinated, leading to proteasomal degradation. Phosphorylated at Thr-235 by MAPK and CDK2, serves to prime phosphorylation at Thr-226 and Ser-231 by GSK3B and acquire DNA-binding as well as transactivation activities, required to induce adipogenesis. MAPK and CDK2 act sequentially to maintain Thr-235 in the primed phosphorylated state during mitotical cloning expansion and thereby progression of terminal differentiation. Phosphorylation at Thr-266 enhances transactivation activity. Phosphorylation at Ser-325 in response to calcium increases transactivation activity. Phosphorylated at Thr-235 by RPS6KA1. In terms of processing, O-glycosylated, glycosylation at Ser-227 and Ser-228 prevents phosphorylation on Thr-235, Ser-231 and Thr-226 and DNA binding activity which delays the adipocyte differentiation program. Post-translationally, acetylated. Acetylation at Lys-43 is an important and dynamic regulatory event that contributes to its ability to transactivate target genes, including those associated with adipogenesis and adipocyte function. Deacetylation by HDAC1 represses its transactivation activity. Acetylated by KAT2A and KAT2B within a cluster of lysine residues between amino acids 129-133, this acetylation is strongly induced by glucocorticoid treatment and enhances transactivation activity. Expressed at low levels in the lung, kidney and spleen.

It localises to the nucleus. Its subcellular location is the cytoplasm. Functionally, important transcription factor regulating the expression of genes involved in immune and inflammatory responses. Also plays a significant role in adipogenesis, as well as in the gluconeogenic pathway, liver regeneration, and hematopoiesis. The consensus recognition site is 5'-T[TG]NNGNAA[TG]-3'. Its functional capacity is governed by protein interactions and post-translational protein modifications. During early embryogenesis, plays essential and redundant roles with CEBPA. Has a promitotic effect on many cell types such as hepatocytes and adipocytes but has an antiproliferative effect on T-cells by repressing MYC expression, facilitating differentiation along the T-helper 2 lineage. Binds to regulatory regions of several acute-phase and cytokines genes and plays a role in the regulation of acute-phase reaction and inflammation. Also plays a role in intracellular bacteria killing. During adipogenesis, is rapidly expressed and, after activation by phosphorylation, induces CEBPA and PPARG, which turn on the series of adipocyte genes that give rise to the adipocyte phenotype. The delayed transactivation of the CEBPA and PPARG genes by CEBPB appears necessary to allow mitotic clonal expansion and thereby progression of terminal differentiation. Essential for female reproduction because of a critical role in ovarian follicle development. Restricts osteoclastogenesis: together with NFE2L1; represses expression of DSPP during odontoblast differentiation. In terms of biological role, essential for gene expression induction in activated macrophages. Plays a major role in immune responses such as CD4(+) T-cell response, granuloma formation and endotoxin shock. Not essential for intracellular bacteria killing. Its function is as follows. Acts as a dominant negative through heterodimerization with isoform 2. Promotes osteoblast differentiation and osteoclastogenesis. The polypeptide is CCAAT/enhancer-binding protein beta (Homo sapiens (Human)).